Consider the following 178-residue polypeptide: Crossover junction endodeoxyribonuclease RuvC (178 aa).

Catalysis depends on residues D11, E71, and D143. The Mg(2+) site is built by D11, E71, and D143.

This sequence belongs to the RuvC family. In terms of assembly, homodimer which binds Holliday junction (HJ) DNA. The HJ becomes 2-fold symmetrical on binding to RuvC with unstacked arms; it has a different conformation from HJ DNA in complex with RuvA. In the full resolvosome a probable DNA-RuvA(4)-RuvB(12)-RuvC(2) complex forms which resolves the HJ. Mg(2+) is required as a cofactor.

It is found in the cytoplasm. It catalyses the reaction Endonucleolytic cleavage at a junction such as a reciprocal single-stranded crossover between two homologous DNA duplexes (Holliday junction).. The RuvA-RuvB-RuvC complex processes Holliday junction (HJ) DNA during genetic recombination and DNA repair. Endonuclease that resolves HJ intermediates. Cleaves cruciform DNA by making single-stranded nicks across the HJ at symmetrical positions within the homologous arms, yielding a 5'-phosphate and a 3'-hydroxyl group; requires a central core of homology in the junction. The consensus cleavage sequence is 5'-(A/T)TT(C/G)-3'. Cleavage occurs on the 3'-side of the TT dinucleotide at the point of strand exchange. HJ branch migration catalyzed by RuvA-RuvB allows RuvC to scan DNA until it finds its consensus sequence, where it cleaves and resolves the cruciform DNA. The chain is Crossover junction endodeoxyribonuclease RuvC from Neisseria meningitidis serogroup C / serotype 2a (strain ATCC 700532 / DSM 15464 / FAM18).